Reading from the N-terminus, the 289-residue chain is Eukaryotic translation initiation factor 3 subunit F (289 aa).

One can recognise an MPN domain in the interval V7 to G137.

It belongs to the eIF-3 subunit F family. Component of the eukaryotic translation initiation factor 3 (eIF-3) complex.

It is found in the cytoplasm. In terms of biological role, component of the eukaryotic translation initiation factor 3 (eIF-3) complex, which is involved in protein synthesis of a specialized repertoire of mRNAs and, together with other initiation factors, stimulates binding of mRNA and methionyl-tRNAi to the 40S ribosome. The eIF-3 complex specifically targets and initiates translation of a subset of mRNAs involved in cell proliferation. In Bombyx mori (Silk moth), this protein is Eukaryotic translation initiation factor 3 subunit F.